The following is a 323-amino-acid chain: Fructose-bisphosphate aldolase (323 aa).

S50 is a beta-D-fructose 1,6-bisphosphate binding site. D83 serves as the catalytic Proton donor. Residues H84 and H178 each contribute to the Zn(2+) site. H178, G179, and K182 together coordinate beta-D-fructose 1,6-bisphosphate. Zn(2+) is bound at residue H210. G211, S213, N253, D255, S256, R259, and R280 together coordinate beta-D-fructose 1,6-bisphosphate.

This sequence belongs to the class II fructose-bisphosphate aldolase family. As to quaternary structure, homodimer. Zn(2+) serves as cofactor.

It carries out the reaction beta-D-fructose 1,6-bisphosphate = D-glyceraldehyde 3-phosphate + dihydroxyacetone phosphate. The protein operates within carbohydrate degradation; glycolysis; D-glyceraldehyde 3-phosphate and glycerone phosphate from D-glucose: step 4/4. Plays a key role in glycolysis by catalyzing the cleavage of fructose 1,6-bisphosphate into dihydroxyacetone phosphate and glyceraldehyde 3-phosphate. Does not cleave D-tagatose-1,6-bisphosphate. In Giardia intestinalis (strain ATCC 50803 / WB clone C6) (Giardia lamblia), this protein is Fructose-bisphosphate aldolase.